The sequence spans 630 residues: Cytochrome B pre-mRNA-processing protein 2 (630 aa).

The protein localises to the mitochondrion. Its function is as follows. Appears to be specifically required for the splicing of the terminal intron (bI5) of the cytochrome b pre-mRNA. Can also stimulates the splicing of the omega intron of the precursor of large ribosomal RNA. The sequence is that of Cytochrome B pre-mRNA-processing protein 2 (CBP2) from Saccharomyces paradoxus (Yeast).